A 1985-amino-acid chain; its full sequence is Non-reducing polyketide synthase ntnG (1985 aa).

The N-terminal acylcarrier protein transacylase (SAT) domain stretch occupies residues Leu7–His243. Residues Ser364 to Glu792 form the Ketosynthase family 3 (KS3) domain. Residues Cys536, His671, and His711 each act as for beta-ketoacyl synthase activity in the active site. The interval Val889–Cys1148 is malonyl-CoA:ACP transacylase (MAT) domain. Ser980 serves as the catalytic For acyl/malonyl transferase activity. The segment at His1261–Asp1392 is N-terminal hotdog fold. Residues His1261–His1567 enclose the PKS/mFAS DH domain. The interval Lys1265–Leu1566 is product template (PT) domain. The active-site Proton acceptor; for dehydratase activity is His1293. The C-terminal hotdog fold stretch occupies residues Ala1414 to His1567. The active-site Proton donor; for dehydratase activity is the Asp1479. The segment covering Asn1578–Pro1605 has biased composition (polar residues). Positions Asn1578–Ser1622 are disordered. Residues Ser1622–Glu1699 enclose the Carrier domain. Ser1659 is subject to O-(pantetheine 4'-phosphoryl)serine. The tract at residues Thr1719–Lys1913 is thioesterase (TE) domain.

The protein operates within secondary metabolite biosynthesis; terpenoid biosynthesis. In terms of biological role, non-reducing polyketide synthase; part of the gene cluster that mediates the biosynthesis of the meroterpenoids nectripenoids A and B, as well as cochliquninone D and isocochliquninone E. The pathway probably begins with the HR-PKS ntnH that catalyzes two chain-extension steps to form a reduced triketide, which then primes the SAT domain in the NR-PKS ntnG to initiate three more cycles of extension to give a linear hexaketide corresponding to the polyketide part of nectripenoids. The FAD-dependent monooxygenase ntnJ then performs an oxidative decarboxylation at C11 of the ntnH/ntnG product, via an electrophilic aromatic hydroxylation with concomitant ipso-decarboxylation. The membrane-bound polyprenyl transferase ntnF then introduces a farnesyl group before the FAD-dependent monooxygenase ntnK functions as the first epoxidase on terminal C12'-C13' olefin, followed by a second epoxidation on C7'-C8' catalyzed by ntnA. The terpene cyclase/mutase ntnI then initiates the sequential tricyclic ring formation through protonation of the terminal epoxide and catalyzes the regioselective and stereoselective 6/6/6-tricyclic ring formation. The cytochrome P450 monooxygenase ntnM may then hydroxylate C1'. This Nectria sp protein is Non-reducing polyketide synthase ntnG.